A 219-amino-acid chain; its full sequence is Baseplate wedge protein gp11 (219 aa).

Homotrimer. The gp11 trimer interacts with gp10 trimer and with the short tail fiber (STF) composed of the gp12 trimer. Part of the baseplate macromolecular complex which consists of gp5, gp5.4, gp27 (central spike complex); gp6, gp25, gp53 (inner baseplate); gp7, gp8 (intermediate baseplate); gp9, gp10, gp11, gp12 (peripheral); gp48 and gp54 (proximal region of the tail tube).

Its subcellular location is the virion. Functionally, baseplate protein that is part of the baseplate wedge and that connects the short tail fibers to the baseplate. Involved in the tail assembly. The protein is Baseplate wedge protein gp11 (11) of Enterobacteria phage T4 (Bacteriophage T4).